Consider the following 290-residue polypeptide: Phosphoribosylaminoimidazole-succinocarboxamide synthase (290 aa).

The protein belongs to the SAICAR synthetase family.

It catalyses the reaction 5-amino-1-(5-phospho-D-ribosyl)imidazole-4-carboxylate + L-aspartate + ATP = (2S)-2-[5-amino-1-(5-phospho-beta-D-ribosyl)imidazole-4-carboxamido]succinate + ADP + phosphate + 2 H(+). It functions in the pathway purine metabolism; IMP biosynthesis via de novo pathway; 5-amino-1-(5-phospho-D-ribosyl)imidazole-4-carboxamide from 5-amino-1-(5-phospho-D-ribosyl)imidazole-4-carboxylate: step 1/2. The chain is Phosphoribosylaminoimidazole-succinocarboxamide synthase (purC) from Haemophilus influenzae (strain ATCC 51907 / DSM 11121 / KW20 / Rd).